A 737-amino-acid polypeptide reads, in one-letter code: Translation initiation factor IF-2 (737 aa).

A disordered region spans residues 55 to 152; sequence KKKEHIQHNK…PVPPRKNKPL (98 aa). Over residues 60–70 the composition is skewed to basic and acidic residues; the sequence is IQHNKNKDNFH. Residues 88–98 are compositionally biased toward basic residues; the sequence is KNVHKNNRKRS. Positions 105-121 are enriched in low complexity; sequence NNNAKNGQRNNRNNRSN. The span at 122-131 shows a compositional bias: basic residues; it reads NKFKNKRNNN. Low complexity predominate over residues 132–142; the sequence is NKRNNNFKKGN. Positions 238–407 constitute a tr-type G domain; sequence KRPPVVTIMG…LLEAEMLELH (170 aa). The interval 247 to 254 is G1; sequence GHVDHGKT. Residue 247 to 254 participates in GTP binding; that stretch reads GHVDHGKT. The G2 stretch occupies residues 272–276; sequence GITQH. The G3 stretch occupies residues 293 to 296; sequence DTPG. Residues 293-297 and 347-350 each bind GTP; these read DTPGH and NKID. Residues 347 to 350 are G4; the sequence is NKID. The interval 383–385 is G5; the sequence is SAK.

The protein belongs to the TRAFAC class translation factor GTPase superfamily. Classic translation factor GTPase family. IF-2 subfamily.

It localises to the cytoplasm. Functionally, one of the essential components for the initiation of protein synthesis. Protects formylmethionyl-tRNA from spontaneous hydrolysis and promotes its binding to the 30S ribosomal subunits. Also involved in the hydrolysis of GTP during the formation of the 70S ribosomal complex. In Ligilactobacillus salivarius (strain UCC118) (Lactobacillus salivarius), this protein is Translation initiation factor IF-2.